We begin with the raw amino-acid sequence, 614 residues long: Vitamin B12 transporter BtuB (614 aa).

A signal peptide spans 1-20 (MIKKASLLTACSVTAFSAWA). The TonB box signature appears at 26 to 33 (DTLVVTAN). Residues 38–152 (PRSTVLAPTT…IGGVVNIITT (115 aa)) form the TBDR plug domain. Cyanocob(III)alamin-binding positions include Leu-83, Ser-85, Asn-92, and 110-111 (VS). The TBDR beta-barrel domain occupies 155-614 (HPGTEISAGW…EYTLSGSYTF (460 aa)). A run of 3 beta stranded transmembrane segments spans residues 158 to 165 (TEISAGWG), 169 to 178 (YQNYDVSTQQ), and 184 to 195 (TRVTLLGDYAHT). Ca(2+) contacts are provided by Asp-199, Gln-211, Asp-213, and Asp-215. The next 2 beta stranded transmembrane spans lie at 217–227 (FLSKTLYGALE) and 232–248 (DVWSGFVRGYGYDNRTN). Ca(2+) is bound by residues Tyr-249 and Asp-250. A cyanocob(III)alamin-binding site is contributed by Ala-251. Asp-261 is a binding site for Ca(2+). 14 beta stranded membrane-spanning segments follow: residues 263–277 (RKLYSQSWDAGLRYN), 279–296 (ELIKSQLITSYSHSKDYN), 309–325 (TLDEMKQYTVQWANNII), 328–337 (HGNIGAGVDW), 353–369 (YDQRNTGIYLTGLQQVG), 371–381 (FTFEGAGRSDD), 385–400 (FGRHGTWQTSAGWEFI), 403–417 (YRFIASYGTSYKAPN), 434–443 (KSKQWEGAFE), 449–458 (VNWRISGYRN), 473–490 (YYNEGKARIKGVEATANF), 494–509 (PLTHTVSYDYVDARNA), 517–529 (RRAKQQVKYQLDW), and 535–550 (DWGITYQYLGTRYDKD). Residue Thr-309 coordinates cyanocob(III)alamin. Arg-517 is a binding site for cyanocob(III)alamin. Tyr-551 serves as a coordination point for cyanocob(III)alamin. The next 3 beta stranded transmembrane spans lie at 558 to 572 (TVKMGGVSLWDLAVA), 585 to 596 (IANLFDKDYETV), and 602 to 614 (AGREYTLSGSYTF). The TonB C-terminal box motif lies at 597 to 614 (YGYQTAGREYTLSGSYTF).

This sequence belongs to the TonB-dependent receptor family. BtuB (TC 1.B.14.3.1) subfamily.

The protein localises to the cell outer membrane. In terms of biological role, involved in the active translocation of vitamin B12 (cyanocobalamin) across the outer membrane to the periplasmic space. It derives its energy for transport by interacting with the trans-periplasmic membrane protein TonB. This chain is Vitamin B12 transporter BtuB, found in Escherichia coli O6:K15:H31 (strain 536 / UPEC).